The following is a 123-amino-acid chain: S-adenosylmethionine decarboxylase proenzyme 2 (123 aa).

The active-site Schiff-base intermediate with substrate; via pyruvic acid is Ser65. Ser65 is subject to Pyruvic acid (Ser); by autocatalysis. His70 functions as the Proton acceptor; for processing activity in the catalytic mechanism. The Proton donor; for catalytic activity role is filled by Cys85.

The protein belongs to the prokaryotic AdoMetDC family. Type 1 subfamily. In terms of assembly, heterotetramer of two alpha and two beta chains arranged as a dimer of alpha/beta heterodimers. Requires pyruvate as cofactor. Post-translationally, is synthesized initially as an inactive proenzyme. Formation of the active enzyme involves a self-maturation process in which the active site pyruvoyl group is generated from an internal serine residue via an autocatalytic post-translational modification. Two non-identical subunits are generated from the proenzyme in this reaction, and the pyruvate is formed at the N-terminus of the alpha chain, which is derived from the carboxyl end of the proenzyme. The post-translation cleavage follows an unusual pathway, termed non-hydrolytic serinolysis, in which the side chain hydroxyl group of the serine supplies its oxygen atom to form the C-terminus of the beta chain, while the remainder of the serine residue undergoes an oxidative deamination to produce ammonia and the pyruvoyl group blocking the N-terminus of the alpha chain.

The enzyme catalyses S-adenosyl-L-methionine + H(+) = S-adenosyl 3-(methylsulfanyl)propylamine + CO2. The protein operates within amine and polyamine biosynthesis; S-adenosylmethioninamine biosynthesis; S-adenosylmethioninamine from S-adenosyl-L-methionine: step 1/1. Functionally, catalyzes the decarboxylation of S-adenosylmethionine to S-adenosylmethioninamine (dcAdoMet), the propylamine donor required for the synthesis of the polyamines spermine and spermidine from the diamine putrescine. The sequence is that of S-adenosylmethionine decarboxylase proenzyme 2 from Bacillus cereus (strain ZK / E33L).